We begin with the raw amino-acid sequence, 197 residues long: Large ribosomal subunit protein uL10 (197 aa).

Residues 162 to 197 (READGETAETPAQETASDDSKSTKAEASDASTTENK) form a disordered region. A compositionally biased stretch (basic and acidic residues) spans 179-188 (DDSKSTKAEA).

Belongs to the universal ribosomal protein uL10 family. In terms of assembly, part of the ribosomal stalk of the 50S ribosomal subunit. The N-terminus interacts with L11 and the large rRNA to form the base of the stalk. The C-terminus forms an elongated spine to which L12 dimers bind in a sequential fashion forming a multimeric L10(L12)X complex.

Its function is as follows. Forms part of the ribosomal stalk, playing a central role in the interaction of the ribosome with GTP-bound translation factors. This Oenococcus oeni (strain ATCC BAA-331 / PSU-1) protein is Large ribosomal subunit protein uL10.